The following is a 294-amino-acid chain: Acetyl-coenzyme A carboxylase carboxyl transferase subunit beta (294 aa).

One can recognise a CoA carboxyltransferase N-terminal domain in the interval 25–294 (VWTKCTSCEQ…PLVVPVDGSH (270 aa)). The Zn(2+) site is built by C29, C32, C48, and C51. The C4-type zinc finger occupies 29-51 (CTSCEQVLYSAELERNLEVCPKC).

The protein belongs to the AccD/PCCB family. Acetyl-CoA carboxylase is a heterohexamer composed of biotin carboxyl carrier protein (AccB), biotin carboxylase (AccC) and two subunits each of ACCase subunit alpha (AccA) and ACCase subunit beta (AccD). Zn(2+) is required as a cofactor.

It is found in the cytoplasm. It catalyses the reaction N(6)-carboxybiotinyl-L-lysyl-[protein] + acetyl-CoA = N(6)-biotinyl-L-lysyl-[protein] + malonyl-CoA. It functions in the pathway lipid metabolism; malonyl-CoA biosynthesis; malonyl-CoA from acetyl-CoA: step 1/1. Component of the acetyl coenzyme A carboxylase (ACC) complex. Biotin carboxylase (BC) catalyzes the carboxylation of biotin on its carrier protein (BCCP) and then the CO(2) group is transferred by the transcarboxylase to acetyl-CoA to form malonyl-CoA. In Aliivibrio fischeri (strain MJ11) (Vibrio fischeri), this protein is Acetyl-coenzyme A carboxylase carboxyl transferase subunit beta.